The sequence spans 140 residues: Putative nickel-responsive regulator (140 aa).

Positions 81, 92, 94, and 100 each coordinate Ni(2+).

It belongs to the transcriptional regulatory CopG/NikR family. Ni(2+) is required as a cofactor.

Its function is as follows. Transcriptional regulator. The chain is Putative nickel-responsive regulator from Methanothrix thermoacetophila (strain DSM 6194 / JCM 14653 / NBRC 101360 / PT) (Methanosaeta thermophila).